The chain runs to 89 residues: Small ribosomal subunit protein uS15 (89 aa).

It belongs to the universal ribosomal protein uS15 family. In terms of assembly, part of the 30S ribosomal subunit. Forms a bridge to the 50S subunit in the 70S ribosome, contacting the 23S rRNA.

Functionally, one of the primary rRNA binding proteins, it binds directly to 16S rRNA where it helps nucleate assembly of the platform of the 30S subunit by binding and bridging several RNA helices of the 16S rRNA. Its function is as follows. Forms an intersubunit bridge (bridge B4) with the 23S rRNA of the 50S subunit in the ribosome. The sequence is that of Small ribosomal subunit protein uS15 from Pseudarthrobacter chlorophenolicus (strain ATCC 700700 / DSM 12829 / CIP 107037 / JCM 12360 / KCTC 9906 / NCIMB 13794 / A6) (Arthrobacter chlorophenolicus).